Consider the following 310-residue polypeptide: 4-diphosphocytidyl-2-C-methyl-D-erythritol kinase (310 aa).

The active site involves lysine 10. 102–112 (PVAGGMAGGSA) contributes to the ATP binding site. Aspartate 144 is a catalytic residue. The tract at residues 289-310 (TRTARGPAAGAQLLPGPVGSFA) is disordered.

This sequence belongs to the GHMP kinase family. IspE subfamily.

The catalysed reaction is 4-CDP-2-C-methyl-D-erythritol + ATP = 4-CDP-2-C-methyl-D-erythritol 2-phosphate + ADP + H(+). It functions in the pathway isoprenoid biosynthesis; isopentenyl diphosphate biosynthesis via DXP pathway; isopentenyl diphosphate from 1-deoxy-D-xylulose 5-phosphate: step 3/6. Catalyzes the phosphorylation of the position 2 hydroxy group of 4-diphosphocytidyl-2C-methyl-D-erythritol. In Cutibacterium acnes (strain DSM 16379 / KPA171202) (Propionibacterium acnes), this protein is 4-diphosphocytidyl-2-C-methyl-D-erythritol kinase.